Here is a 208-residue protein sequence, read N- to C-terminus: Probable very-long-chain (3R)-3-hydroxyacyl-CoA dehydratase (208 aa).

Residues 1 to 11 (MSKILKIQYLK) lie on the Cytoplasmic side of the membrane. Residues 12 to 35 (LYNVISCFLWMSVLLRTGLIWGIT) traverse the membrane as a helical segment. Topologically, residues 36-46 (KDTAVVFHETN) are lumenal. Residues 47 to 67 (TLVRWVQTLAIAEVFHSIFGL) form a helical membrane-spanning segment. The Cytoplasmic portion of the chain corresponds to 68 to 78 (VSSSPLTTIIQ). Residues 79-97 (VASRLYLVWGVCYPFSYVI) traverse the membrane as a helical segment. Residues 98–102 (EGSPI) lie on the Lumenal side of the membrane. A helical membrane pass occupies residues 103 to 123 (YLSMIIAWSITEIIRYAFYAF). Residues 124 to 134 (NLNGDIPAFLT) lie on the Cytoplasmic side of the membrane. A helical membrane pass occupies residues 135–157 (WLRYNTFLILYPIGAGSEFLLVL). Catalysis depends on residues Tyr-145 and Glu-152. Residues 158–171 (KSRIAAQYVWSLNK) lie on the Lumenal side of the membrane. The chain crosses the membrane as a helical span at residues 172–192 (LLWPILMSIYPPGLYIMYTHM). At 193 to 208 (LAQRRKISKRAAARRT) the chain is on the cytoplasmic side.

It belongs to the very long-chain fatty acids dehydratase HACD family.

It is found in the endoplasmic reticulum membrane. The catalysed reaction is a very-long-chain (3R)-3-hydroxyacyl-CoA = a very-long-chain (2E)-enoyl-CoA + H2O. Its pathway is lipid metabolism; fatty acid biosynthesis. Functionally, catalyzes the third of the four reactions of the long-chain fatty acids elongation cycle. This endoplasmic reticulum-bound enzymatic process, allows the addition of two carbons to the chain of long- and very long-chain fatty acids/VLCFAs per cycle. This enzyme catalyzes the dehydration of the 3-hydroxyacyl-CoA intermediate into trans-2,3-enoyl-CoA, within each cycle of fatty acid elongation. Thereby, it participates in the production of VLCFAs of different chain lengths that are involved in multiple biological processes as precursors of membrane lipids and lipid mediators. This Schizosaccharomyces pombe (strain 972 / ATCC 24843) (Fission yeast) protein is Probable very-long-chain (3R)-3-hydroxyacyl-CoA dehydratase.